The following is a 458-amino-acid chain: MTATPLYRQDTIAAIATPPGRGGVGIIRLSGPASRDLAERILGHCPAPRHAHYGPFYDADAQVLDEGIALFFPGPHSFTGEDVLELQGHGGPVIMDLLLARCVALGARLARPGEFSERAFLNDKLDLAQAEAIADLIDASSRAAAENALRSLQGEFSTRVSALVDKLIELRMFVEAAIDFPEEEIDFLADGKVAAMLQGAQETLGEVRAAAGQGALMREGMNVVIAGRPNAGKSSLLNALTERDSAIVTDIEGTTRDVLREYIHIDGMPLHVIDTAGLRDTPDAIEKIGVARAWEEIEKADRVLLLVDATTTTQTDPMQLWPEFVARLPHPERLTLVRNKIDESGETEQSDLSTSPPIVRLSAKTGLGVDNLKEHLKAVMGFDATTEGRFSARRRHLDALDRAGDALDNGIAQLRGHGAGELLAEDLRDAQQALSEITGEFTADDLLGEIFGSFCIGK.

(6S)-5-formyl-5,6,7,8-tetrahydrofolate is bound by residues R28, E85, and K124. Residues 220–381 (GMNVVIAGRP…LKEHLKAVMG (162 aa)) form the TrmE-type G domain. Position 230 (N230) interacts with K(+). Residues 230–235 (NAGKSS), 249–255 (TDIEGTT), and 274–277 (DTAG) each bind GTP. S234 lines the Mg(2+) pocket. 3 residues coordinate K(+): T249, I251, and T254. T255 contacts Mg(2+). K458 lines the (6S)-5-formyl-5,6,7,8-tetrahydrofolate pocket.

Belongs to the TRAFAC class TrmE-Era-EngA-EngB-Septin-like GTPase superfamily. TrmE GTPase family. Homodimer. Heterotetramer of two MnmE and two MnmG subunits. K(+) serves as cofactor.

Its subcellular location is the cytoplasm. In terms of biological role, exhibits a very high intrinsic GTPase hydrolysis rate. Involved in the addition of a carboxymethylaminomethyl (cmnm) group at the wobble position (U34) of certain tRNAs, forming tRNA-cmnm(5)s(2)U34. The sequence is that of tRNA modification GTPase MnmE from Chromohalobacter salexigens (strain ATCC BAA-138 / DSM 3043 / CIP 106854 / NCIMB 13768 / 1H11).